A 950-amino-acid chain; its full sequence is Glycine dehydrogenase (decarboxylating) (950 aa).

Residue Lys698 is modified to N6-(pyridoxal phosphate)lysine.

This sequence belongs to the GcvP family. The glycine cleavage system is composed of four proteins: P, T, L and H. Pyridoxal 5'-phosphate is required as a cofactor.

The catalysed reaction is N(6)-[(R)-lipoyl]-L-lysyl-[glycine-cleavage complex H protein] + glycine + H(+) = N(6)-[(R)-S(8)-aminomethyldihydrolipoyl]-L-lysyl-[glycine-cleavage complex H protein] + CO2. In terms of biological role, the glycine cleavage system catalyzes the degradation of glycine. The P protein binds the alpha-amino group of glycine through its pyridoxal phosphate cofactor; CO(2) is released and the remaining methylamine moiety is then transferred to the lipoamide cofactor of the H protein. The chain is Glycine dehydrogenase (decarboxylating) from Neisseria meningitidis serogroup C / serotype 2a (strain ATCC 700532 / DSM 15464 / FAM18).